The primary structure comprises 485 residues: MYREKFTKITEGFTFDDVLLIPMRTAVEPKNVVVSSRISRHIQVKVPIVSSPMDTVTEDAMAIAMARYGAIGVIHRNQPREKEVEMVKRVKREETIIIRDVYTISPETPIEVARTLMATRNIAGLPVVKDDKLVGIVTKRDLEFVKKGSSVSDVMVRDVITAPENVDIDEAIEILHKNRIEKLPLVDSSGHLVGLITAKDIITRQKFPDASRDSEGQLMVGAAVGPFDLDRAVEVEKAGADFIVVDTAHADNENVLSSLKKMRKQISVDIVAGNIATAQAAEDLISCDVDGLRVGIGPGSICTTRIVAGVGVPQLTAISDVAEAAKDSGIPVIADGGIRYSGDIVKAIAAGADAVMLGSMLAGTEESPGQEMIINGRKYKAYRGMGSIGALTTGLSDRYSKLGNGFIAEGVEGAVPYRGRVDEVLFQLVGGLRTGMGYVGAATIEDLKRNGKFVRITNNGLRESHPHDIRLISEPPNYQISNISP.

2 consecutive CBS domains span residues 97–154 (IIRD…VSDV) and 155–211 (MVRD…PDAS). NAD(+) contacts are provided by residues Asp-246 and 295 to 297 (GIG). Residues Gly-297 and Gly-299 each contribute to the K(+) site. Residue Ser-300 coordinates IMP. Cys-302 is a K(+) binding site. The active-site Thioimidate intermediate is the Cys-302. IMP contacts are provided by residues 335–337 (DGG), 358–359 (GS), and 382–386 (YRGMG). The active-site Proton acceptor is the Arg-398. Residue Glu-409 coordinates IMP. K(+) contacts are provided by Glu-463, Ser-464, and His-465.

The protein belongs to the IMPDH/GMPR family. In terms of assembly, homotetramer. K(+) is required as a cofactor.

The enzyme catalyses IMP + NAD(+) + H2O = XMP + NADH + H(+). The protein operates within purine metabolism; XMP biosynthesis via de novo pathway; XMP from IMP: step 1/1. Its activity is regulated as follows. Mycophenolic acid (MPA) is a non-competitive inhibitor that prevents formation of the closed enzyme conformation by binding to the same site as the amobile flap. In contrast, mizoribine monophosphate (MZP) is a competitive inhibitor that induces the closed conformation. MPA is a potent inhibitor of mammalian IMPDHs but a poor inhibitor of the bacterial enzymes. MZP is a more potent inhibitor of bacterial IMPDH. Functionally, catalyzes the conversion of inosine 5'-phosphate (IMP) to xanthosine 5'-phosphate (XMP), the first committed and rate-limiting step in the de novo synthesis of guanine nucleotides, and therefore plays an important role in the regulation of cell growth. The chain is Inosine-5'-monophosphate dehydrogenase from Thermoplasma acidophilum (strain ATCC 25905 / DSM 1728 / JCM 9062 / NBRC 15155 / AMRC-C165).